Reading from the N-terminus, the 232-residue chain is Homeobox protein SAX-1 (232 aa).

3 disordered regions span residues 1 to 64 (CLPD…SCAK), 122 to 150 (KQHPGADGAAAPAPPAAARCSPSPPRPAA), and 185 to 208 (LLGARVPRASTPRTSENPPRLCPS). The homeobox DNA-binding region spans 65-124 (PRRARTAFTYEQLVALENKFRATRYLSVCERLNLALSLSLTETQVKIWFQNRRTKWKKQH). A compositionally biased stretch (low complexity) spans 126–142 (GADGAAAPAPPAAARCS).

Belongs to the NK-1 homeobox family. Transiently expressed in the birth zone of the whole spinal cord regardless of the axial level.

The protein resides in the nucleus. The protein is Homeobox protein SAX-1 (SAX1) of Gallus gallus (Chicken).